The chain runs to 380 residues: Probable peptidoglycan glycosyltransferase FtsW (380 aa).

A run of 10 helical transmembrane segments spans residues 14–34 (LLWC…SSSI), 52–72 (ILYL…PISF), 79–99 (IILL…NSIH), 112–131 (MQPS…NYLS), 141–161 (FGGF…LLVE), 162–182 (PDLG…FISG), 188–208 (FIPT…KSPY), 268–288 (IIGE…IFFI), 304–324 (IFFS…QTLI), and 341–361 (PLIS…IILI).

The protein belongs to the SEDS family. FtsW subfamily.

It localises to the cell membrane. The catalysed reaction is [GlcNAc-(1-&gt;4)-Mur2Ac(oyl-L-Ala-gamma-D-Glu-L-Lys-D-Ala-D-Ala)](n)-di-trans,octa-cis-undecaprenyl diphosphate + beta-D-GlcNAc-(1-&gt;4)-Mur2Ac(oyl-L-Ala-gamma-D-Glu-L-Lys-D-Ala-D-Ala)-di-trans,octa-cis-undecaprenyl diphosphate = [GlcNAc-(1-&gt;4)-Mur2Ac(oyl-L-Ala-gamma-D-Glu-L-Lys-D-Ala-D-Ala)](n+1)-di-trans,octa-cis-undecaprenyl diphosphate + di-trans,octa-cis-undecaprenyl diphosphate + H(+). Its pathway is cell wall biogenesis; peptidoglycan biosynthesis. Peptidoglycan polymerase that is essential for cell division. The polypeptide is Probable peptidoglycan glycosyltransferase FtsW (Buchnera aphidicola subsp. Baizongia pistaciae (strain Bp)).